A 147-amino-acid polypeptide reads, in one-letter code: MTEADIAVKSSPRDYKKLTRLYCMNGGFHLQILADGTVAGAADENTYSILRIKATSPGVVVIEGSETGLYLSMNEHGKLYASSLVTDESYFLEKMEENHYNTYQSQKYGENWYVGIKKNGKMKRGPRTHIGQKAIFFLPRQVEQEED.

Residue N25 coordinates heparin. The interval K117–K133 is heparin-binding.

The protein belongs to the heparin-binding growth factors family.

The protein localises to the secreted. It localises to the cytoplasm. Its subcellular location is the cell cortex. The protein resides in the cytosol. It is found in the nucleus. Functionally, plays an important role in the regulation of cell survival, cell division, angiogenesis, cell differentiation and cell migration. Functions as a potent mitogen in vitro. Acts as a ligand for FGFR1 and integrins. Binds to FGFR1 in the presence of heparin leading to FGFR1 dimerization and activation via sequential autophosphorylation on tyrosine residues which act as docking sites for interacting proteins, leading to the activation of several signaling cascades. Binds to integrins. Its binding to integrins and subsequent ternary complex formation with integrins and FGFR1 are essential for FGF1 signaling. The protein is Putative fibroblast growth factor 1 (fgf1) of Danio rerio (Zebrafish).